A 342-amino-acid polypeptide reads, in one-letter code: Palmitoyltransferase PFA4 (342 aa).

The Cytoplasmic portion of the chain corresponds to 1-8 (MITFSNPW). A helical transmembrane segment spans residues 9 to 29 (IGVIIPCIIIFTLSTFSAIYI). Residues 30 to 38 (LPHHVSNNE) are Lumenal-facing. The chain crosses the membrane as a helical span at residues 39-59 (LTLFICASAMVWISYIIAIIV). The Cytoplasmic segment spans residues 60-124 (PPGSPPKNYT…GHRNMPHFMR (65 aa)). A DHHC domain is found at 77-127 (MYCLKCKAYKPERTHHSKALGVCVLKMDHHCPWTNNTVGHRNMPHFMRFLV). Cysteine 107 serves as the catalytic S-palmitoyl cysteine intermediate. The helical transmembrane segment at 125 to 145 (FLVWVDMTVGYLFIRLCIRIM) threads the bilayer. Over 146–162 (KLWRDKHLPSYLFDKTE) the chain is Lumenal. The chain crosses the membrane as a helical span at residues 163-183 (VILSIVFLPASFFVLFTVGIL). At 184-342 (TIRVFVNMCN…ADFGVEHTDI (159 aa)) the chain is on the cytoplasmic side.

It belongs to the DHHC palmitoyltransferase family. PFA4 subfamily.

Its subcellular location is the endoplasmic reticulum membrane. The enzyme catalyses L-cysteinyl-[protein] + hexadecanoyl-CoA = S-hexadecanoyl-L-cysteinyl-[protein] + CoA. Its function is as follows. Mediates the reversible addition of palmitate to target proteins, thereby regulating their membrane association and biological function. The chain is Palmitoyltransferase PFA4 from Yarrowia lipolytica (strain CLIB 122 / E 150) (Yeast).